Reading from the N-terminus, the 256-residue chain is Thiazole synthase (256 aa).

Lys95 serves as the catalytic Schiff-base intermediate with DXP. Residues Gly156, 182–183 (AG), and 204–205 (NT) each bind 1-deoxy-D-xylulose 5-phosphate.

Belongs to the ThiG family. Homotetramer. Forms heterodimers with either ThiH or ThiS.

Its subcellular location is the cytoplasm. It carries out the reaction [ThiS sulfur-carrier protein]-C-terminal-Gly-aminoethanethioate + 2-iminoacetate + 1-deoxy-D-xylulose 5-phosphate = [ThiS sulfur-carrier protein]-C-terminal Gly-Gly + 2-[(2R,5Z)-2-carboxy-4-methylthiazol-5(2H)-ylidene]ethyl phosphate + 2 H2O + H(+). It participates in cofactor biosynthesis; thiamine diphosphate biosynthesis. Catalyzes the rearrangement of 1-deoxy-D-xylulose 5-phosphate (DXP) to produce the thiazole phosphate moiety of thiamine. Sulfur is provided by the thiocarboxylate moiety of the carrier protein ThiS. In vitro, sulfur can be provided by H(2)S. This is Thiazole synthase from Escherichia coli O45:K1 (strain S88 / ExPEC).